We begin with the raw amino-acid sequence, 512 residues long: SWI/SNF complex subunit SWI3A (512 aa).

The region spanning 13–110 is the SWIRM domain; that stretch reads YTIPAQSSWF…FSSSLKKNDH (98 aa). One can recognise an SANT domain in the interval 223–274; it reads SAAAVWTEEEILLLLESVLKHGDDWELISQSVSTKSRLDCISKLIELPFGEF. The tract at residues 291–325 is disordered; sequence DENTEQVQTDGQEHEETETREEKEDRVNEDEPPAK. Residues 424–488 are a coiled coil; it reads ALGAAAAQAK…IEGVKETIIQ (65 aa).

As to quaternary structure, homodimers and heterodimers. Interacts with SWI3B, SWI3C, BSH, and the C-terminus of FCA, but not with BRM or SWI3D. As to expression, expressed in roots, stems, leaves and flowers, but not in siliques.

The protein localises to the nucleus. Functionally, component of a multiprotein complex equivalent of the SWI/SNF complex, an ATP-dependent chromatin-remodeling complex, which is required for the positive and negative regulation of gene expression of a large number of genes. It changes chromatin structure by altering DNA-histone contacts within a nucleosome, leading eventually to a change in nucleosome position, thus facilitating or repressing binding of gene-specific transcription factors. The protein is SWI/SNF complex subunit SWI3A (SWI3A) of Arabidopsis thaliana (Mouse-ear cress).